The chain runs to 333 residues: GDP-fucose transporter 1 (333 aa).

Transmembrane regions (helical) follow at residues 13–33 (SIKIAFVVALYWVVSISMVFL), 45–65 (APMFVTWFQCVVAVVTCFILG), 95–115 (LVFVGMIAFNNLALKFVGVAF), 139–159 (TSMPALLMCGVIVAGFFVGVN), 169–189 (MAGIMYGVLASLCVALNAIYI), 211–231 (AIFLFLPVITFMGEIPDIAAS), 239–259 (YWFLMTVAGLLGIAIGLVSML), and 293–313 (TATWWLGNVFVLGGSLGYVLV).

Belongs to the TPT transporter family. SLC35C subfamily.

The protein localises to the golgi apparatus membrane. The enzyme catalyses GMP(out) + GDP-beta-L-fucose(in) = GMP(in) + GDP-beta-L-fucose(out). Its function is as follows. Antiporter specific for GDP-l-fucose and depending on the concomitant reverse transport of GMP. Involved in GDP-fucose import from the cytoplasm into the Golgi lumen. The polypeptide is GDP-fucose transporter 1 (slc35c1) (Monosiga brevicollis (Choanoflagellate)).